A 105-amino-acid polypeptide reads, in one-letter code: Small ribosomal subunit protein uS10 (105 aa).

The protein belongs to the universal ribosomal protein uS10 family. In terms of assembly, part of the 30S ribosomal subunit.

In terms of biological role, involved in the binding of tRNA to the ribosomes. The chain is Small ribosomal subunit protein uS10 from Thermus thermophilus (strain ATCC BAA-163 / DSM 7039 / HB27).